The primary structure comprises 354 residues: Thiamine thiazole synthase 1, chloroplastic (354 aa).

Residues M1–C45 constitute a chloroplast transit peptide. Residues A100, E120–Q121, G128, and V193 contribute to the substrate site. A 2,3-didehydroalanine (Cys) modification is found at C222. Residues D224, H239, M291, and R301–G303 contribute to the substrate site.

The protein belongs to the THI4 family. Homooctamer. It depends on Fe cation as a cofactor. Post-translationally, during the catalytic reaction, a sulfide is transferred from Cys-222 to a reaction intermediate, generating a dehydroalanine residue. Highest expression in developing embryos and green leaves and a very low level expression seen in endosperm, roots, etiolated shoots and immature ears.

The protein localises to the plastid. It is found in the chloroplast. It catalyses the reaction [ADP-thiazole synthase]-L-cysteine + glycine + NAD(+) = [ADP-thiazole synthase]-dehydroalanine + ADP-5-ethyl-4-methylthiazole-2-carboxylate + nicotinamide + 3 H2O + 2 H(+). Involved in biosynthesis of the thiamine precursor thiazole. Catalyzes the conversion of NAD and glycine to adenosine diphosphate 5-(2-hydroxyethyl)-4-methylthiazole-2-carboxylic acid (ADT), an adenylated thiazole intermediate. The reaction includes an iron-dependent sulfide transfer from a conserved cysteine residue of the protein to a thiazole intermediate. The enzyme can only undergo a single turnover, which suggests it is a suicide enzyme. May have additional roles in adaptation to various stress conditions and in DNA damage tolerance. This chain is Thiamine thiazole synthase 1, chloroplastic, found in Zea mays (Maize).